Reading from the N-terminus, the 942-residue chain is Chitin synthase 2 (942 aa).

The segment covering 1–13 has biased composition (basic and acidic residues); sequence MAYHYSHDSDRRQ. Residues 1 to 132 are disordered; sequence MAYHYSHDSD…PSHTDYSDED (132 aa). Low complexity predominate over residues 18–33; sequence YNYPSNYSNPSQYSIP. The N-linked (GlcNAc...) asparagine glycan is linked to Asn23. The span at 71-80 shows a compositional bias: polar residues; that stretch reads PQPTASSMTS. Asn587 is a glycosylation site (N-linked (GlcNAc...) asparagine). The next 4 helical transmembrane spans lie at 590–610, 625–645, 663–683, and 696–716; these read IFAATYAMVCFWRIWTSGHGI, FNLLFNWLSVSSFYLAFFFLI, IFQVFNKVYIALIFVVLVCSL, and FCIFMFAVCQGILLYCAGWTV. N-linked (GlcNAc...) asparagine glycosylation is present at Asn736. The next 2 helical transmembrane spans lie at 739 to 759 and 770 to 790; these read FVQLALSLMATYGLYLISSLL and FVQYLLLLPSYVNILLIYAMC. N-linked (GlcNAc...) asparagine glycosylation is present at Asn803. 2 helical membrane passes run 873–893 and 916–936; these read VVLLFLGSNMLIILLFTSSTF and IFYAVLGLSALRFAGCLLYLI.

The protein belongs to the chitin synthase family. Class III subfamily.

It localises to the cell membrane. The catalysed reaction is [(1-&gt;4)-N-acetyl-beta-D-glucosaminyl](n) + UDP-N-acetyl-alpha-D-glucosamine = [(1-&gt;4)-N-acetyl-beta-D-glucosaminyl](n+1) + UDP + H(+). Polymerizes chitin, a structural polymer of the cell wall and septum, by transferring the sugar moiety of UDP-GlcNAc to the non-reducing end of the growing chitin polymer. The sequence is that of Chitin synthase 2 from Cryptococcus neoformans var. grubii serotype A (strain H99 / ATCC 208821 / CBS 10515 / FGSC 9487) (Filobasidiella neoformans var. grubii).